Here is a 637-residue protein sequence, read N- to C-terminus: MTQSVHAETHGFQTEVKQLLSLMAHSLYSNKEVFLRELISNASDAADKLRFKALSDASLFENDGQLRVRLVVDKENRTLTISDNGIGMTRDQVIEHLGTIAKSGTAEFFKNLSGDQGRDSQLIGQFGVGFYSAFIVADKVTVVSRAAGTAPEQGVQWESEGEGSFTVADVTKEGRGTDVILHLRAEEEEFLDDWRLRAVVAKYSDHISVPVEMFKEGTPDREEDGETVVGTPGEWEQVNRATALWTRNPKEIKDEEYQEFYKHVAHDFEDPLLWGHNRVEGAQEYTSLLYVPARAPFDLYNREQKHGLKLYVQRVFIMDDAEQFMPTYLRFVKGVLDSNDLPLNVSREILQDNKVTVSLRKACSKRVLTMLAKLAKDDAEKYAKFWSEFGNVLKEGPAEDYANREEIAKLLRFASTAGEGEAQTVSLEDYVGRMKEGQQKIYYITADSFAAAKNSPHLEIFRKKGVEVLLMWERVDEWLMSHLTEFDGKQLVSVTRGELDLGDLEDEASKQAQEEAEKANAGLVERVKTSLGEAVKEVRVTHRLTDSPSCIVTDNHGMSTQMIKLMRAAGQPVPEQKYILELNPDHALVKKLDTIEDEALFGEWVTLLHEQAQLAEQGGLNDPASFVSRINRLLLQA.

The interval 1-347 is a; substrate-binding; it reads MTQSVHAETH…SNDLPLNVSR (347 aa). Residues 348-564 are b; it reads EILQDNKVTV…NHGMSTQMIK (217 aa). A c region spans residues 565-637; sequence LMRAAGQPVP…SRINRLLLQA (73 aa).

Belongs to the heat shock protein 90 family. In terms of assembly, homodimer.

It localises to the cytoplasm. Functionally, molecular chaperone. Has ATPase activity. This chain is Chaperone protein HtpG, found in Aeromonas salmonicida (strain A449).